A 234-amino-acid chain; its full sequence is dTDP-4-amino-4,6-dideoxyglucose formyltransferase (234 aa).

DTDP-4-amino-4,6-dideoxy-alpha-D-glucose contacts are provided by residues asparagine 9 and 62–64 (HCK). 65–67 (QRF) lines the (6R)-10-formyltetrahydrofolate pocket. Histidine 81 acts as the Proton acceptor in catalysis. Residue 90-94 (GWFPQ) coordinates dTDP-4-amino-4,6-dideoxy-alpha-D-glucose. Positions 112, 116, and 175 each coordinate (6R)-10-formyltetrahydrofolate. Position 209 (asparagine 209) interacts with dTDP-4-amino-4,6-dideoxy-alpha-D-glucose.

It belongs to the dTDP-Qui4N formyltransferase family. In terms of assembly, homodimer.

The catalysed reaction is dTDP-4-amino-4,6-dideoxy-alpha-D-glucose + (6R)-10-formyltetrahydrofolate = dTDP-4-formamido-4,6-dideoxy-alpha-D-glucose + (6S)-5,6,7,8-tetrahydrofolate + H(+). Sugar N-formyltransferase that catalyzes the conversion of dTDP-4-amino-4,6-dideoxyglucose into dTDP-4-formamido-4,6-dideoxyglucose using N(10)-formyltetrahydrofolate as the carbon source. Plays a role in virulence. The chain is dTDP-4-amino-4,6-dideoxyglucose formyltransferase from Mycobacterium bovis (strain ATCC BAA-935 / AF2122/97).